A 573-amino-acid chain; its full sequence is DNA ligase (573 aa).

An ATP-binding site is contributed by Glu248. Residue Lys250 is the N6-AMP-lysine intermediate of the active site. Positions 255, 270, 299, 340, 432, and 438 each coordinate ATP.

It belongs to the ATP-dependent DNA ligase family. Mg(2+) is required as a cofactor.

The enzyme catalyses ATP + (deoxyribonucleotide)n-3'-hydroxyl + 5'-phospho-(deoxyribonucleotide)m = (deoxyribonucleotide)n+m + AMP + diphosphate.. Its function is as follows. DNA ligase that seals nicks in double-stranded DNA during DNA replication, DNA recombination and DNA repair. The chain is DNA ligase from Methanocaldococcus jannaschii (strain ATCC 43067 / DSM 2661 / JAL-1 / JCM 10045 / NBRC 100440) (Methanococcus jannaschii).